We begin with the raw amino-acid sequence, 848 residues long: Dynein axonemal intermediate chain 4 (848 aa).

2 disordered regions span residues 345–370 (SKAN…SETS) and 431–464 (EPEP…IHAE). Over residues 359–370 (PGSTTEKNSETS) the composition is skewed to polar residues. Residues 442–456 (ESAKHEEVEEESKKE) show a composition bias toward basic and acidic residues. WD repeat units lie at residues 534–574 (QSPY…NVPV), 583–631 (KHLG…DCYD), 658–698 (SRQA…QYLD), 702–742 (GHKG…PSLS), 745–784 (PATS…LDPL), and 790–829 (NPGI…TVLE).

In terms of assembly, part of the multisubunit axonemal dynein complex formed at least of two heavy chains and a number of intermediate and light chains. Associated with axonemal dynein subunits such as, DNAH2, DNAI3, and DYNLT1. Interacts with DYNLT1.

It is found in the cytoplasm. The protein localises to the cytoskeleton. The protein resides in the flagellum axoneme. It localises to the cilium axoneme. Its subcellular location is the dynein axonemal particle. Plays a critical role in the assembly of axonemal dynein complex, thereby playing a role in ciliary motility. The polypeptide is Dynein axonemal intermediate chain 4 (Homo sapiens (Human)).